Reading from the N-terminus, the 94-residue chain is FXYD domain-containing ion transport regulator 6 (94 aa).

Residues 1-17 (METVLVLCSLLAPVVLA) form the signal peptide. Over 18–34 (SAAEKEKEKDPFYYDYQ) the chain is Extracellular. A helical membrane pass occupies residues 35–57 (TLRIGGLVFAVVLFSVGILLILS). Residues 58-94 (RRCKCSFNQKPRAPGDEEAQVENLITTNAAEPQKAEN) are Cytoplasmic-facing.

The protein belongs to the FXYD family. In terms of assembly, regulatory subunit of the sodium/potassium-transporting ATPase which is composed of a catalytic alpha subunit, a non-catalytic beta subunit and an additional regulatory subunit. The regulatory subunit, a member of the FXYD protein family, modulates the enzymatic activity in a tissue- and isoform-specific way by changing affinities of the Na+/K+-ATPase toward Na(+), K(+) or ATP.

The protein resides in the cell membrane. Associates with and regulates the activity of the sodium/potassium-transporting ATPase (NKA) which catalyzes the hydrolysis of ATP coupled with the exchange of Na(+) and K(+) ions across the plasma membrane. Reduces the apparent affinity for intracellular Na(+) with no change in the apparent affinity for extracellular K(+). In addition to modulating NKA kinetics, may also function as a regulator of NKA localization to the plasma membrane. In Mus musculus (Mouse), this protein is FXYD domain-containing ion transport regulator 6 (Fxyd6).